Consider the following 639-residue polypeptide: Putative oxidoreductase UacF (639 aa).

5 consecutive 4Fe-4S ferredoxin-type domains span residues 3–32 (KFIA…ENWP), 47–77 (KGQA…TFQS), 78–107 (DSVQ…MVDT), 110–139 (QKCD…LMDD), and 201–235 (QQAT…YIRL). Cysteine 12, cysteine 15, cysteine 18, cysteine 22, cysteine 56, cysteine 59, cysteine 64, cysteine 68, cysteine 87, cysteine 90, cysteine 93, cysteine 97, cysteine 112, cysteine 115, cysteine 125, cysteine 129, cysteine 210, cysteine 213, cysteine 219, and cysteine 223 together coordinate [4Fe-4S] cluster.

[4Fe-4S] cluster serves as cofactor.

Involved in formate-dependent uric acid degradation under microaerobic and anaerobic conditions. May reduce the enzymes necessary for uric acid degradation. In Escherichia coli (strain K12), this protein is Putative oxidoreductase UacF.